The chain runs to 195 residues: MRLLLLLLVAASAVVRSDASANLGGVPGKRLKMQYATGPLLKFQICVSUGYRRVFEEYMRVISQRYPDIRIEGENYLPQPIYRHIASFLSVFKLVLIGLIIVGKDPFAFFGMQAPSIWQWGQENKVYACMMVFFLSNMIENQCMSTGAFEITLNDVPVWSKLESGHLPSMQQLVQILDNEMKLNVHMDSIPHHRS.

Positions 1 to 19 (MRLLLLLLVAASAVVRSDA) are cleaved as a signal peptide. The cysteinyl-selenocysteine (Cys-Sec) cross-link spans 46 to 49 (CVSU). Position 49 (Sec49) is a non-standard amino acid, selenocysteine. The helical transmembrane segment at 85 to 103 (IASFLSVFKLVLIGLIIVG) threads the bilayer.

Belongs to the SelWTH family. Selenoprotein T subfamily. In terms of processing, may contain a selenide-sulfide bond between Cys-46 and Sec-49. This bond is speculated to serve as redox-active pair.

The protein localises to the endoplasmic reticulum membrane. The catalysed reaction is [thioredoxin]-dithiol + NADP(+) = [thioredoxin]-disulfide + NADPH + H(+). In terms of biological role, selenoprotein with thioredoxin reductase-like oxidoreductase activity. Protects dopaminergic neurons against oxidative stress and cell death. Involved in ADCYAP1/PACAP-induced calcium mobilization and neuroendocrine secretion. Plays a role in fibroblast anchorage and redox regulation. In gastric smooth muscle, modulates the contraction processes through the regulation of calcium release and MYLK activation. In pancreatic islets, involved in the control of glucose homeostasis, contributes to prolonged ADCYAP1/PACAP-induced insulin secretion. The polypeptide is Thioredoxin reductase-like selenoprotein T (Bos taurus (Bovine)).